The sequence spans 435 residues: MAAAKHFTYVILGGGVAAGYAAREFAKQGVKPGELAIISKESVAPYERPALSKGYLFPQNAARLPGFHTCVGSGGERLLPEWYSEKGIELILSTEIVKADLASKTLTSSADATFTYDTLLIATGSSVIKLTDFGVQGAEANDILYLRDIEDADKLVAAMQAKKDGKAVIVGGGYIGLELSAALKTNNFDVTMVYPEPWCMPRLFTSGLAAFYEGYYANKGIHIIKGTVAVGFDADANGDVTAVKLKNGNVLEADIVIVGVGGRPLTHLFKGQVAEEKGGIKTDAFFETSVPGVYAIADVAAFPMKLYNEIRRVEHVDHARKSAEQAVKAIKAKEAGESVPEYDYLPYFYSRSFDLSWQFYGDNVGEDVLFGDNDPTAAKPKFGSYWIKDGKVVGVFLEGGSAEENQVIAKVARAQPPVADVEALKKEGLDFAAKV.

Residues 14–17 (GGVA), E41, R48, K53, I96, and 147–148 (RD) contribute to the FAD site. NAD(+) contacts are provided by residues 172–178 (GGYIGLE), E196, R202, and G261. Residue 174-178 (YIGLE) coordinates NADP(+). NADP(+) is bound by residues R202 and G261. D298 serves as a coordination point for FAD. Residue 314 to 315 (EH) coordinates NAD(+). NADP(+) is bound at residue 314–315 (EH). V316 contacts FAD. R320 serves as a coordination point for L-ascorbate. Y349 serves as a coordination point for FAD. Y349 contributes to the NAD(+) binding site. Y349 serves as a coordination point for NADP(+). R351 contacts L-ascorbate.

This sequence belongs to the FAD-dependent oxidoreductase family. The cofactor is FAD. In terms of tissue distribution, expressed in anthers.

It is found in the cytoplasm. The catalysed reaction is 2 monodehydro-L-ascorbate radical + NADH + H(+) = 2 L-ascorbate + NAD(+). In terms of biological role, catalyzes the conversion of monodehydroascorbate to ascorbate, oxidizing NADH in the process. Ascorbate is a major antioxidant against reactive oxygen species (ROS) and nitric oxide (NO). The polypeptide is Monodehydroascorbate reductase 4, cytosolic (Oryza sativa subsp. japonica (Rice)).